The chain runs to 457 residues: tRNA modification GTPase MnmE (457 aa).

(6S)-5-formyl-5,6,7,8-tetrahydrofolate-binding residues include Arg24, Glu81, and Lys121. The region spanning 218–380 is the TrmE-type G domain; that stretch reads GIKIVITGKP…LLKYLTKIIS (163 aa). Position 228 (Asn228) interacts with K(+). GTP contacts are provided by residues 228 to 233, 247 to 253, 272 to 275, and 338 to 341; these read NVGKSS, TNIAGTT, DTAG, and NKAD. Ser232 serves as a coordination point for Mg(2+). K(+)-binding residues include Thr247, Ile249, and Thr252. Thr253 provides a ligand contact to Mg(2+). A (6S)-5-formyl-5,6,7,8-tetrahydrofolate-binding site is contributed by Lys457.

Belongs to the TRAFAC class TrmE-Era-EngA-EngB-Septin-like GTPase superfamily. TrmE GTPase family. As to quaternary structure, homodimer. Heterotetramer of two MnmE and two MnmG subunits. K(+) serves as cofactor.

Its subcellular location is the cytoplasm. Functionally, exhibits a very high intrinsic GTPase hydrolysis rate. Involved in the addition of a carboxymethylaminomethyl (cmnm) group at the wobble position (U34) of certain tRNAs, forming tRNA-cmnm(5)s(2)U34. This is tRNA modification GTPase MnmE from Baumannia cicadellinicola subsp. Homalodisca coagulata.